Consider the following 239-residue polypeptide: 2,3,4,5-tetrahydropyridine-2,6-dicarboxylate N-acetyltransferase (239 aa).

The protein belongs to the transferase hexapeptide repeat family. DapH subfamily.

It carries out the reaction (S)-2,3,4,5-tetrahydrodipicolinate + acetyl-CoA + H2O = L-2-acetamido-6-oxoheptanedioate + CoA. It functions in the pathway amino-acid biosynthesis; L-lysine biosynthesis via DAP pathway; LL-2,6-diaminopimelate from (S)-tetrahydrodipicolinate (acetylase route): step 1/3. Catalyzes the transfer of an acetyl group from acetyl-CoA to tetrahydrodipicolinate. This Staphylococcus carnosus (strain TM300) protein is 2,3,4,5-tetrahydropyridine-2,6-dicarboxylate N-acetyltransferase.